Consider the following 97-residue polypeptide: Large ribosomal subunit protein bL28 (97 aa).

It belongs to the bacterial ribosomal protein bL28 family.

The chain is Large ribosomal subunit protein bL28 from Rickettsia typhi (strain ATCC VR-144 / Wilmington).